Here is a 558-residue protein sequence, read N- to C-terminus: Atlastin-1 (558 aa).

The segment at 1–29 is disordered; it reads MAKSRRDRNSWGGFSEKSSDWSSEEEEPV. An N-terminal hypervariable region (HVR) region spans residues 1–34; it reads MAKSRRDRNSWGGFSEKSSDWSSEEEEPVRKAGP. The Cytoplasmic segment spans residues 1–449; that stretch reads MAKSRRDRNS…NIFHAARTPA (449 aa). S10, S22, and S23 each carry phosphoserine. The GB1/RHD3-type G domain occupies 64–309; that stretch reads DKEVVAVSVA…LIPWLLSPES (246 aa). The GDP site is built by R77, K78, G79, K80, S81, F82, Q148, R217, D218, V276, and N279. Residues R77, K78, G79, K80, S81, and F82 each coordinate GTP. S81 lines the Mg(2+) pocket. GTP contacts are provided by R217, D218, and V276. The 3HB (three-helix bundle) domain stretch occupies residues 347 to 438; sequence MLQATAEANN…YIQYIKHNDS (92 aa). N6-acetyllysine is present on K395. The stretch at 412–439 forms a coiled coil; the sequence is EFSRRYLQQLESEIDELYIQYIKHNDSK. Positions 439–447 are linker; sequence KNIFHAART. The helical transmembrane segment at 450-470 threads the bilayer; that stretch reads TLFVVIFITYVIAGVTGFIGL. A topological domain (lumenal) is located at residue D471. A helical membrane pass occupies residues 472-492; it reads IIASLCNMIMGLTLITLCTWA. Residues 493 to 558 lie on the Cytoplasmic side of the membrane; the sequence is YIRYSGEYRE…PTEQPEKKKI (66 aa). Residues 521–558 are autoinhibitory domain; sequence NEALYKLYSAAATHRHLYQQAFPAPKSEPTEQPEKKKI.

The protein belongs to the TRAFAC class dynamin-like GTPase superfamily. GB1/RHD3 GTPase family. GB1 subfamily. In terms of assembly, monomeric and homodimeric. The homodimer, transiently formed by two molecules on opposing membranes, is the active form mediating ER membrane fusion. Interacts with REEP1, REEP5, RTN3 and RTN4 (via the transmembrane region); these proteins are involved in endoplasmic reticulum tubular network organization. Interacts with ZFYVE27; both proteins are involved in endoplasmic reticulum tubular network organization. Interacts with ARL6IP1; both proteins are involved in endoplasmic reticulum tubular network organization. Interacts with SPAST; the interaction is direct, could recruit SPAST to Golgi membranes. Interacts (via N-terminal region) with MAP4K4 (via CNH regulatory domain). May interact with TMED2. Interacts with CPT1C. In terms of processing, phosphorylated. Phosphorylation, by different kinases, of the N-terminal hypervariable region (HVR) regulates the ATL1-mediated membrane tethering step. As to expression, detected in brain where it is abundant in lamina V of the cerebral cortex. Also expressed within the hippocampus, mainly in pyramidal neurons in CA1 and CA3. Weakly expressed in the striatum and more robustly in amygdala and several thalamic nuclei. Also detected in several mesopontine nuclei (at protein level).

The protein localises to the endoplasmic reticulum membrane. The protein resides in the golgi apparatus membrane. It localises to the cell projection. Its subcellular location is the axon. The catalysed reaction is GTP + H2O = GDP + phosphate + H(+). Functionally, atlastin-1 (ATL1) is a membrane-anchored GTPase that mediates the GTP-dependent fusion of endoplasmic reticulum (ER) membranes, maintaining the continuous ER network. It facilitates the formation of three-way junctions where ER tubules intersect. Two atlastin-1 on neighboring ER tubules bind GTP and form loose homodimers through the GB1/RHD3-type G domains and 3HB regions. Upon GTP hydrolysis, the 3HB regions tighten, pulling the membranes together to drive their fusion. After fusion, the homodimer disassembles upon release of inorganic phosphate (Pi). Subsequently, GDP dissociates, resetting the monomers to a conformation ready for a new fusion cycle. May also regulate more or less directly Golgi biogenesis. Indirectly regulates axonal development. This Rattus norvegicus (Rat) protein is Atlastin-1.